The following is a 403-amino-acid chain: CCA-adding enzyme (403 aa).

2 residues coordinate ATP: Gly-32 and Arg-35. Residues Gly-32 and Arg-35 each coordinate CTP. Residues Asp-45 and Asp-47 each coordinate Mg(2+). Residues Arg-116, Asp-159, Arg-162, Arg-165, and Arg-168 each contribute to the ATP site. Residues Arg-116, Asp-159, Arg-162, Arg-165, and Arg-168 each coordinate CTP.

Belongs to the tRNA nucleotidyltransferase/poly(A) polymerase family. Bacterial CCA-adding enzyme type 3 subfamily. In terms of assembly, homodimer. Mg(2+) serves as cofactor.

The enzyme catalyses a tRNA precursor + 2 CTP + ATP = a tRNA with a 3' CCA end + 3 diphosphate. The catalysed reaction is a tRNA with a 3' CCA end + 2 CTP + ATP = a tRNA with a 3' CCACCA end + 3 diphosphate. Functionally, catalyzes the addition and repair of the essential 3'-terminal CCA sequence in tRNAs without using a nucleic acid template. Adds these three nucleotides in the order of C, C, and A to the tRNA nucleotide-73, using CTP and ATP as substrates and producing inorganic pyrophosphate. tRNA 3'-terminal CCA addition is required both for tRNA processing and repair. Also involved in tRNA surveillance by mediating tandem CCA addition to generate a CCACCA at the 3' terminus of unstable tRNAs. While stable tRNAs receive only 3'-terminal CCA, unstable tRNAs are marked with CCACCA and rapidly degraded. This Leuconostoc citreum (strain KM20) protein is CCA-adding enzyme.